The primary structure comprises 295 residues: Gamma-glutamyl-L-1-hydroxyisopropylamide hydrolase (295 aa).

The 217-residue stretch at 5–221 (RILICDGNTE…LRESARSLVE (217 aa)) folds into the Glutamine amidotransferase type-1 domain. C104 acts as the Nucleophile in catalysis. Active-site residues include H200 and E202.

It carries out the reaction gamma-L-glutamyl-L-alaninol + H2O = L-alaninol + L-glutamate. Functionally, involved in the degradation of isopropylamine, which is a constituent of the herbicides atrazine. Catalyzes the hydrolysis of gamma-glutamyl-L-alaninol (GALO) to L-alaninol and L-glutamate. It can also uses gamma-glutamyl-isopropylamide, gamma-glutamyl-ethylamide, L-glutamine, and gamma-glutamyl-p-nitroanilide. The protein is Gamma-glutamyl-L-1-hydroxyisopropylamide hydrolase (ipuF) of Pseudomonas sp.